We begin with the raw amino-acid sequence, 174 residues long: Photosystem II repair protein PSB27-H1, chloroplastic (174 aa).

The tract at residues 1 to 35 (MASASATATLLKPNLPPHKPTIIASSVSPPLPPPR) is disordered. Position 94 is a phosphothreonine (Thr-94). Tyr-132 carries the post-translational modification Phosphotyrosine.

It belongs to the Psb27 family.

Its subcellular location is the plastid. The protein resides in the chloroplast thylakoid membrane. Its function is as follows. Probably involved in repair of photodamaged photosystem II (PSII). The polypeptide is Photosystem II repair protein PSB27-H1, chloroplastic (PSB27-1) (Arabidopsis thaliana (Mouse-ear cress)).